The primary structure comprises 220 residues: Protein-L-isoaspartate O-methyltransferase (220 aa).

The active site involves Ser69.

It belongs to the methyltransferase superfamily. L-isoaspartyl/D-aspartyl protein methyltransferase family.

The protein resides in the cytoplasm. The catalysed reaction is [protein]-L-isoaspartate + S-adenosyl-L-methionine = [protein]-L-isoaspartate alpha-methyl ester + S-adenosyl-L-homocysteine. Functionally, catalyzes the methyl esterification of L-isoaspartyl residues in peptides and proteins that result from spontaneous decomposition of normal L-aspartyl and L-asparaginyl residues. It plays a role in the repair and/or degradation of damaged proteins. The polypeptide is Protein-L-isoaspartate O-methyltransferase (Alcanivorax borkumensis (strain ATCC 700651 / DSM 11573 / NCIMB 13689 / SK2)).